The primary structure comprises 336 residues: Zinc transporter ZIP11 (336 aa).

7 helical membrane-spanning segments follow: residues 12-32, 44-64, 75-95, 188-208, 258-278, 280-300, and 316-336; these read LLGT…VFIF, LGFA…APAI, SFAF…VYLA, IMLL…AVGV, WYGQ…TIAI, LAEP…VYVV, and LASW…VGLG.

This sequence belongs to the ZIP transporter (TC 2.A.5) family.

It localises to the cell membrane. The protein localises to the nucleus. It is found in the cytoplasm. The protein resides in the golgi apparatus. In terms of biological role, functions as a cellular zinc transporter. The protein is Zinc transporter ZIP11 (slc39a11) of Xenopus tropicalis (Western clawed frog).